Here is a 100-residue protein sequence, read N- to C-terminus: Small ribosomal subunit protein uS14c (100 aa).

The disordered stretch occupies residues 1–54 (MARKSLIQRERKRQKLEQKFHSIRRSSKKEISKVSSLSGKWEIHGKLQSPPRNS).

Belongs to the universal ribosomal protein uS14 family. In terms of assembly, part of the 30S ribosomal subunit.

The protein localises to the plastid. It localises to the chloroplast. Functionally, binds 16S rRNA, required for the assembly of 30S particles. The protein is Small ribosomal subunit protein uS14c of Piper cenocladum (Ant piper).